The primary structure comprises 218 residues: MTNSSPVYDWFQERLEIQAIADDVSSKYVPPHVNIFYCLGGITLVCFLVQFATGFAMTFYYKPTVTEAYSSVSYLMSDVSFGWLIRSVHRWSASMMVLMLILHVFRVYLTGGFKRPRELTWVTGVVMAVITVSFGVTGYSLPWDQVGYWAVKIVSGVPAAIPVVGDFMVELLRGGESVGQSTLTRFYSLHTFVLPWLLAVFMLMHFLMIRKQGISGPL.

The chain crosses the membrane as a helical span at residues 35-55 (IFYCLGGITLVCFLVQFATGF). Heme c is bound at residue Cys-38. Residues His-89 and His-103 each contribute to the heme b site. 3 helical membrane passes run 93–113 (ASMM…TGGF), 119–139 (LTWV…VTGY), and 189–209 (LHTF…FLMI). Residues His-190 and His-205 each contribute to the heme b site.

It belongs to the cytochrome b family. PetB subfamily. The 4 large subunits of the cytochrome b6-f complex are cytochrome b6, subunit IV (17 kDa polypeptide, PetD), cytochrome f and the Rieske protein, while the 4 small subunits are PetG, PetL, PetM and PetN. The complex functions as a dimer. It depends on heme b as a cofactor. Heme c is required as a cofactor.

It is found in the cellular thylakoid membrane. Functionally, component of the cytochrome b6-f complex, which mediates electron transfer between photosystem II (PSII) and photosystem I (PSI), cyclic electron flow around PSI, and state transitions. In Prochlorococcus marinus (strain MIT 9303), this protein is Cytochrome b6.